Consider the following 50-residue polypeptide: uncharacterized protein (50 aa).

The tract at residues 28–50 is disordered; it reads SKLSPVTNGGKTIGKSNKVSKND. Residues 29–50 are compositionally biased toward polar residues; it reads KLSPVTNGGKTIGKSNKVSKND.

This is an uncharacterized protein from Haemophilus influenzae (strain ATCC 51907 / DSM 11121 / KW20 / Rd).